We begin with the raw amino-acid sequence, 367 residues long: 2-aminoethylphosphonate--pyruvate transaminase (367 aa).

Lysine 194 carries the N6-(pyridoxal phosphate)lysine modification.

This sequence belongs to the class-V pyridoxal-phosphate-dependent aminotransferase family. PhnW subfamily. Homodimer. It depends on pyridoxal 5'-phosphate as a cofactor.

It catalyses the reaction (2-aminoethyl)phosphonate + pyruvate = phosphonoacetaldehyde + L-alanine. Functionally, involved in phosphonate degradation. In Salmonella schwarzengrund (strain CVM19633), this protein is 2-aminoethylphosphonate--pyruvate transaminase.